The sequence spans 354 residues: Uroporphyrinogen decarboxylase (354 aa).

Residues 27-31 (RQAGR), Asp-77, Tyr-154, Thr-209, and His-327 each bind substrate.

It belongs to the uroporphyrinogen decarboxylase family. Homodimer.

Its subcellular location is the cytoplasm. The enzyme catalyses uroporphyrinogen III + 4 H(+) = coproporphyrinogen III + 4 CO2. The protein operates within porphyrin-containing compound metabolism; protoporphyrin-IX biosynthesis; coproporphyrinogen-III from 5-aminolevulinate: step 4/4. Functionally, catalyzes the decarboxylation of four acetate groups of uroporphyrinogen-III to yield coproporphyrinogen-III. This Sodalis glossinidius (strain morsitans) protein is Uroporphyrinogen decarboxylase.